Here is a 404-residue protein sequence, read N- to C-terminus: Cysteine desulfurase IscS (404 aa).

Pyridoxal 5'-phosphate is bound by residues 75 to 76 (AT), asparagine 155, glutamine 183, and 203 to 205 (SGH). The residue at position 206 (lysine 206) is an N6-(pyridoxal phosphate)lysine. A pyridoxal 5'-phosphate-binding site is contributed by threonine 243. The active-site Cysteine persulfide intermediate is cysteine 328. Cysteine 328 contacts [2Fe-2S] cluster.

The protein belongs to the class-V pyridoxal-phosphate-dependent aminotransferase family. NifS/IscS subfamily. In terms of assembly, homodimer. Forms a heterotetramer with IscU, interacts with other sulfur acceptors. Requires pyridoxal 5'-phosphate as cofactor.

The protein resides in the cytoplasm. It catalyses the reaction (sulfur carrier)-H + L-cysteine = (sulfur carrier)-SH + L-alanine. The protein operates within cofactor biosynthesis; iron-sulfur cluster biosynthesis. Functionally, master enzyme that delivers sulfur to a number of partners involved in Fe-S cluster assembly, tRNA modification or cofactor biosynthesis. Catalyzes the removal of elemental sulfur atoms from cysteine to produce alanine. Functions as a sulfur delivery protein for Fe-S cluster synthesis onto IscU, an Fe-S scaffold assembly protein, as well as other S acceptor proteins. This chain is Cysteine desulfurase IscS, found in Shewanella oneidensis (strain ATCC 700550 / JCM 31522 / CIP 106686 / LMG 19005 / NCIMB 14063 / MR-1).